Consider the following 568-residue polypeptide: MTVSTFNRTWAKVIVNALLRYGVKHFCIAPGSRSTPLTLEALQLQQNQQAQCHSHFDERGLGFFALGIAKVTNDPVAIIVTSGTAVANLYPAIIEASLTHHKLIVLSADRPPELIGCGANQAIPQQGIFADYPIAGVNLPKPAEHYNAGWLVATIEQACVTQSQQGGVVHINAPFAEPLYEADENAINTHPWLKPIQSWLINPQTKWINSQTIQSEVSMHENWDYWRTKRGVIVVGKLPVEQGIGIKAWAETLGWCLITDVQSCVDANLPYADIWLSNNTVHQRLLQADIVIQFGGQIVSKRVNKFLEAFKGEFWQVDEYSDYLNPFAHHQTRFVAKAHHFLRVHPPLRQKPWLLEPLALSQFCAGFIEQQVGGSLNEASLAHHIEEVLATSGNLFIGNSLFVRLVDALCKLPEGYPVYTNRGASGIDGLIATMAGVAKGSGQPTVGVIGDISALHDLNSVSLLNKISHPCILFVINNSGGAIFDMLPVEAQAKEQFYRLSHNYEFAPIATMFGIEYIRPFTWADLKAKLKLAYGRKGVTIVEIKVNDQDGSNLYKSLVKQISQAEIA.

It belongs to the TPP enzyme family. MenD subfamily. As to quaternary structure, homodimer. Mg(2+) serves as cofactor. Mn(2+) is required as a cofactor. Requires thiamine diphosphate as cofactor.

The enzyme catalyses isochorismate + 2-oxoglutarate + H(+) = 5-enolpyruvoyl-6-hydroxy-2-succinyl-cyclohex-3-ene-1-carboxylate + CO2. It functions in the pathway quinol/quinone metabolism; 1,4-dihydroxy-2-naphthoate biosynthesis; 1,4-dihydroxy-2-naphthoate from chorismate: step 2/7. Its pathway is quinol/quinone metabolism; menaquinone biosynthesis. Catalyzes the thiamine diphosphate-dependent decarboxylation of 2-oxoglutarate and the subsequent addition of the resulting succinic semialdehyde-thiamine pyrophosphate anion to isochorismate to yield 2-succinyl-5-enolpyruvyl-6-hydroxy-3-cyclohexene-1-carboxylate (SEPHCHC). The polypeptide is 2-succinyl-5-enolpyruvyl-6-hydroxy-3-cyclohexene-1-carboxylate synthase (Actinobacillus pleuropneumoniae serotype 5b (strain L20)).